A 122-amino-acid chain; its full sequence is Large ribosomal subunit protein uL14 (122 aa).

This sequence belongs to the universal ribosomal protein uL14 family. In terms of assembly, part of the 50S ribosomal subunit. Forms a cluster with proteins L3 and L19. In the 70S ribosome, L14 and L19 interact and together make contacts with the 16S rRNA in bridges B5 and B8.

Functionally, binds to 23S rRNA. Forms part of two intersubunit bridges in the 70S ribosome. This Maricaulis maris (strain MCS10) (Caulobacter maris) protein is Large ribosomal subunit protein uL14.